Consider the following 1024-residue polypeptide: Beta-galactosidase (1024 aa).

2 residues coordinate substrate: N103 and D202. D202 lines the Na(+) pocket. Residues E417, H419, and E462 each coordinate Mg(2+). Residues E462 and 538-541 (EYAH) each bind substrate. E462 acts as the Proton donor in catalysis. Catalysis depends on E538, which acts as the Nucleophile. N598 lines the Mg(2+) pocket. Na(+)-binding residues include F602 and N605. Residues N605 and W1000 each contribute to the substrate site.

Belongs to the glycosyl hydrolase 2 family. Homotetramer. The cofactor is Mg(2+). It depends on Na(+) as a cofactor.

It carries out the reaction Hydrolysis of terminal non-reducing beta-D-galactose residues in beta-D-galactosides.. The protein is Beta-galactosidase of Escherichia coli O6:K15:H31 (strain 536 / UPEC).